We begin with the raw amino-acid sequence, 1475 residues long: ABC transporter G family member 15 (1475 aa).

Positions 1 to 10 are enriched in basic and acidic residues; the sequence is MDSNENKKNG. 2 disordered regions span residues 1 to 40 and 75 to 94; these read MDSN…EEHI and NIKN…GGGA. Residues 17 to 34 are compositionally biased toward low complexity; sequence NIINNNNDNNNNNDNNNN. Residues 25-67 are a coiled coil; sequence NNNNNDNNNNSTEEHIESVEQSIKEFNNVANELETEFRDYLVE. In terms of domain architecture, ABC transporter 1 spans 155–404; it reads LNVKNWFKKS…FIDMGFECEP (250 aa). One can recognise an ABC transmembrane type-2 1 domain in the interval 507–753; the sequence is WGDKFSLISR…FTGERYLEKS (247 aa). 5 helical membrane-spanning segments follow: residues 596-616, 623-641, 653-673, 680-699, and 770-790; these read IPII…MFGL, FFIN…NNLY, IGQN…SYII, VWFG…RALM, and ICIV…VLNI. Positions 842 to 1087 constitute an ABC transporter 2 domain; that stretch reads FTWQHMYYSV…LTSYFQRHGV (246 aa). 879–886 contacts ATP; it reads GSSGAGKT. Transmembrane regions (helical) follow at residues 1180-1200, 1216-1236, 1256-1276, 1293-1313, 1323-1343, and 1449-1469; these read GYSY…GWTF, FIFN…PQFI, FALS…TIFF, FFFW…GQAI, ALNL…VLVI, and FGII…FVFL. The ABC transmembrane type-2 2 domain occupies 1180–1404; that stretch reads GYSYGTFIQS…TCSDYAFEFL (225 aa).

Belongs to the ABC transporter superfamily. ABCG family. PDR (TC 3.A.1.205) subfamily.

The protein resides in the membrane. In Dictyostelium discoideum (Social amoeba), this protein is ABC transporter G family member 15 (abcG15).